Consider the following 238-residue polypeptide: Ribonuclease PH (238 aa).

Residues 67–87 are disordered; that stretch reads PRSTHTRSDREAARGKQSGRT. Residues arginine 86 and 124-126 each bind phosphate; that span reads GTR.

It belongs to the RNase PH family. As to quaternary structure, homohexameric ring arranged as a trimer of dimers.

It catalyses the reaction tRNA(n+1) + phosphate = tRNA(n) + a ribonucleoside 5'-diphosphate. Phosphorolytic 3'-5' exoribonuclease that plays an important role in tRNA 3'-end maturation. Removes nucleotide residues following the 3'-CCA terminus of tRNAs; can also add nucleotides to the ends of RNA molecules by using nucleoside diphosphates as substrates, but this may not be physiologically important. Probably plays a role in initiation of 16S rRNA degradation (leading to ribosome degradation) during starvation. This Ralstonia nicotianae (strain ATCC BAA-1114 / GMI1000) (Ralstonia solanacearum) protein is Ribonuclease PH.